Reading from the N-terminus, the 159-residue chain is Ribosomal RNA large subunit methyltransferase H (159 aa).

S-adenosyl-L-methionine contacts are provided by residues leucine 76, glycine 108, and 127–132 (FSKMTF).

Belongs to the RNA methyltransferase RlmH family. As to quaternary structure, homodimer.

It localises to the cytoplasm. The enzyme catalyses pseudouridine(1915) in 23S rRNA + S-adenosyl-L-methionine = N(3)-methylpseudouridine(1915) in 23S rRNA + S-adenosyl-L-homocysteine + H(+). Specifically methylates the pseudouridine at position 1915 (m3Psi1915) in 23S rRNA. In Clostridium botulinum (strain 657 / Type Ba4), this protein is Ribosomal RNA large subunit methyltransferase H.